The following is a 204-amino-acid chain: MKVVAFERQQQGTGASRRLRNAGKTTGIVYGGEAAPQMIELDHNALWHALKKEAFHSSILDLEVAGKSQRVLLRDVQYHPFRQLVLHVDFQRIDPKKKLHTKAPLHFLNAETSPAVKLSSAVVSHVVTEIEIECLPADLPEFLEVDLSKIEAGQSLHAKDIALPNGVALTAHVDAENPVIASATIPAGAVSDEAAAGEGETPAA.

The protein belongs to the bacterial ribosomal protein bL25 family. CTC subfamily. As to quaternary structure, part of the 50S ribosomal subunit; part of the 5S rRNA/L5/L18/L25 subcomplex. Contacts the 5S rRNA. Binds to the 5S rRNA independently of L5 and L18.

Its function is as follows. This is one of the proteins that binds to the 5S RNA in the ribosome where it forms part of the central protuberance. The protein is Large ribosomal subunit protein bL25 of Burkholderia mallei (strain NCTC 10247).